Here is a 422-residue protein sequence, read N- to C-terminus: Tyrosine--tRNA ligase (422 aa).

Position 35 (tyrosine 35) interacts with L-tyrosine. The 'HIGH' region motif lies at 40–49 (PTADSLHIGH). Residues tyrosine 170 and glutamine 174 each contribute to the L-tyrosine site. The 'KMSKS' region motif lies at 232-236 (KFGKT). Residue lysine 235 coordinates ATP. The S4 RNA-binding domain occupies 355–421 (LTLVDLLVES…GKKKYFLVTY (67 aa)).

Belongs to the class-I aminoacyl-tRNA synthetase family. TyrS type 1 subfamily. In terms of assembly, homodimer.

It is found in the cytoplasm. It carries out the reaction tRNA(Tyr) + L-tyrosine + ATP = L-tyrosyl-tRNA(Tyr) + AMP + diphosphate + H(+). Functionally, catalyzes the attachment of tyrosine to tRNA(Tyr) in a two-step reaction: tyrosine is first activated by ATP to form Tyr-AMP and then transferred to the acceptor end of tRNA(Tyr). The sequence is that of Tyrosine--tRNA ligase from Bacillus pumilus (strain SAFR-032).